The chain runs to 876 residues: Alanine--tRNA ligase (876 aa).

N6-acetyllysine is present on lysine 74. Residues histidine 564, histidine 568, cysteine 666, and histidine 670 each coordinate Zn(2+).

This sequence belongs to the class-II aminoacyl-tRNA synthetase family. As to quaternary structure, homotetramer. It depends on Zn(2+) as a cofactor.

The protein localises to the cytoplasm. The enzyme catalyses tRNA(Ala) + L-alanine + ATP = L-alanyl-tRNA(Ala) + AMP + diphosphate. Its function is as follows. Catalyzes the attachment of alanine to tRNA(Ala) in a two-step reaction: alanine is first activated by ATP to form Ala-AMP and then transferred to the acceptor end of tRNA(Ala). Also edits incorrectly charged Ser-tRNA(Ala) and Gly-tRNA(Ala) via its editing domain. This chain is Alanine--tRNA ligase, found in Escherichia coli O1:K1 / APEC.